We begin with the raw amino-acid sequence, 208 residues long: Sexual inducer glycoprotein (208 aa).

An N-terminal signal peptide occupies residues 1-11 (MAVVVVNSATA). Asn-89, Asn-119, Asn-131, Asn-139, Asn-146, and Asn-188 each carry an N-linked (GlcNAc...) asparagine glycan.

The sexual inducer is a glycoprotein synthesized and released by sexual males at about the time they release sperm packets. It is one of the most potent biological effector molecules known: it exhibits full effectiveness in converting asexually growing males and females to the sexual pathway at about 10(-7) m. The sequence is that of Sexual inducer glycoprotein from Volvox carteri (Green alga).